Consider the following 471-residue polypeptide: Putative multidrug resistance protein MdtD (471 aa).

The Periplasmic segment spans residues 1-11 (MTDLPDSTRWQ). The chain crosses the membrane as a helical span at residues 12–32 (LWIVAFGFFMQSLDTTIVNTA). Residues 33-48 (LPSMAQSLGESPLHMH) lie on the Cytoplasmic side of the membrane. Residues 49 to 69 (MVIVSYVLTVAVMLPASGWLA) traverse the membrane as a helical segment. The Periplasmic portion of the chain corresponds to 70-76 (DKVGVRN). A helical transmembrane segment spans residues 77–97 (IFFTAIVLFTLGSLFCALSGT). Topologically, residues 98–101 (LNEL) are cytoplasmic. Residues 102 to 124 (LLARALQGVGGAMMVPVGRLTVM) traverse the membrane as a helical segment. Topologically, residues 125-137 (KIVPREQYMAAMT) are periplasmic. Residues 138–158 (FVTLPGQVGPLLGPALGGLLV) form a helical membrane-spanning segment. The Cytoplasmic portion of the chain corresponds to 159 to 164 (EYASWH). Residues 165–185 (WIFLINIPVGIIGAIATLLLM) form a helical membrane-spanning segment. Topologically, residues 186–196 (PNYTMQTWRFD) are periplasmic. A helical transmembrane segment spans residues 197 to 217 (LSGFLLLAVGMAVLTLALDGS). Residues 218–224 (KGTGLSP) are Cytoplasmic-facing. A helical membrane pass occupies residues 225 to 245 (LAIAGLVAVGVVALVLYLLHA). At 246 to 262 (RNNNRALFSLKLFRTRT) the chain is on the periplasmic side. The chain crosses the membrane as a helical span at residues 263–283 (FSLGLAGSFAGRIGSGMLPFM). Topologically, residues 284–285 (TP) are cytoplasmic. A helical membrane pass occupies residues 286 to 306 (VFLQIGLGFSPFHAGLMMIPM). The Periplasmic segment spans residues 307-341 (VLGSMGMKRIVVQVVNRFGYRRVLVATTLGLSLVT). The chain crosses the membrane as a helical span at residues 342 to 362 (LLFMTTALLGWYYVLPFVLFL). Residues 363 to 395 (QGMVNSTRFSSMNTLTLKDLPDNLASSGNSLLS) lie on the Cytoplasmic side of the membrane. A helical transmembrane segment spans residues 396–416 (MIMQLSMSIGVTIAGLLLGLF). The Periplasmic segment spans residues 417–430 (GSQHVSVDSGTTQT). The chain crosses the membrane as a helical span at residues 431-451 (VFMYTWLSMALIIALPAFIFA). Residues 452-471 (RVPNDTHQNVAISRRKRSAQ) are Cytoplasmic-facing.

The protein belongs to the major facilitator superfamily. TCR/Tet family.

The protein localises to the cell inner membrane. The protein is Putative multidrug resistance protein MdtD of Shigella boydii serotype 4 (strain Sb227).